A 267-amino-acid chain; its full sequence is DNA repair protein RecO (267 aa).

Belongs to the RecO family.

In terms of biological role, involved in DNA repair and RecF pathway recombination. This is DNA repair protein RecO from Prochlorococcus marinus (strain MIT 9303).